The following is a 152-amino-acid chain: Transcription elongation factor Spt5 (152 aa).

One can recognise a KOW domain in the interval 99–128; that stretch reads PGDVVEVISGPFRGTQAQVIRVEEAKGEVV.

The protein belongs to the archaeal Spt5 family. As to quaternary structure, heterodimer composed of Spt4 and Spt5. Interacts with RNA polymerase (RNAP).

Its function is as follows. Stimulates transcription elongation. This is Transcription elongation factor Spt5 from Saccharolobus solfataricus (strain ATCC 35092 / DSM 1617 / JCM 11322 / P2) (Sulfolobus solfataricus).